We begin with the raw amino-acid sequence, 293 residues long: Lysosomal amino acid transporter 1 homolog (293 aa).

The Lumenal portion of the chain corresponds to 1–37 (MVWRTLGASNFSTCPNGSVQWIWDVFGECAQDGWDEA). N-linked (GlcNAc...) asparagine glycosylation is found at N10 and N16. In terms of domain architecture, PQ-loop 1 spans 34–100 (WDEASVGLGL…LADQLPLQTY (67 aa)). The chain crosses the membrane as a helical span at residues 38–58 (SVGLGLVSILCFAASTFPQYI). At 59 to 71 (KACKTGNMDQALS) the chain is on the cytoplasmic side. The chain crosses the membrane as a helical span at residues 72–92 (LWFLLGWIGGDSCNLIGSFLA). Residues 93–96 (DQLP) are Lumenal-facing. A helical membrane pass occupies residues 97 to 117 (LQTYTAVYYVLADLMMLTLYF). At 118–127 (HYKFKKRPSP) the chain is on the cytoplasmic side. The chain crosses the membrane as a helical span at residues 128-148 (LSAPINSVLLFILGTVCITPL). Residues 149-182 (LSSTDPVAVPREGFRGRTLLSVEPGNKPFTKKEV) are Lumenal-facing. The helical transmembrane segment at 183–203 (IGFVIGSASSLLYLLSRLPQI) threads the bilayer. The PQ-loop 2 domain maps to 191 to 243 (SSLLYLLSRLPQIRTNFIRQSTQGISYSLFALVMLGNTLYGLSVLLKNPEVGQ). At 204-214 (RTNFIRQSTQG) the chain is on the cytoplasmic side. Residues 215 to 235 (ISYSLFALVMLGNTLYGLSVL) form a helical membrane-spanning segment. Topologically, residues 236–254 (LKNPEVGQSEGSYLLHHLP) are lumenal. Residues 255–275 (WLVGSLGVLLLDTIISIQFLV) traverse the membrane as a helical segment. Residues 276-293 (YRSHETAAASEREPLLPS) are Cytoplasmic-facing. The short motif at 290–291 (LL) is the Di-leucine motif element.

Belongs to the laat-1 family. Ubiquitously expressed.

It localises to the lysosome membrane. In terms of biological role, amino acid transporter that specifically mediates the pH-dependent export of the cationic amino acids arginine, histidine and lysine from lysosomes. This Mus musculus (Mouse) protein is Lysosomal amino acid transporter 1 homolog.